We begin with the raw amino-acid sequence, 317 residues long: Carbamate kinase (317 aa).

The protein belongs to the carbamate kinase family. Homodimer.

It catalyses the reaction hydrogencarbonate + NH4(+) + ATP = carbamoyl phosphate + ADP + H2O + H(+). It functions in the pathway metabolic intermediate metabolism; carbamoyl phosphate degradation; CO(2) and NH(3) from carbamoyl phosphate: step 1/1. The protein is Carbamate kinase (CBK) of Giardia intestinalis (Giardia lamblia).